A 553-amino-acid chain; its full sequence is Putative transport protein YidE (553 aa).

Transmembrane regions (helical) follow at residues 4 to 24, 28 to 48, 65 to 85, 95 to 115, and 158 to 178; these read IALT…IGNV, GIGL…HFVS, FGLI…FFAS, LFAV…HKLF, and MSYA…MWML. 2 consecutive RCK C-terminal domains span residues 191 to 276 and 279 to 361; these read QQHE…VIGQ and DTSL…VLGN. The next 6 membrane-spanning stretches (helical) occupy residues 371-391, 393-413, 439-459, 464-484, 493-513, and 533-553; these read MLPV…PVFV, GFPA…ALIL, IVLF…NTLV, LSWI…VGIL, YLTM…LAFA, and LVMF…WSIG.

It belongs to the AAE transporter (TC 2.A.81) family. YidE subfamily.

The protein localises to the cell membrane. In Shigella boydii serotype 4 (strain Sb227), this protein is Putative transport protein YidE.